The following is a 63-amino-acid chain: Beta-defensin 4 (63 aa).

A signal peptide spans 1-22 (MRIHYLLFSFLLVLLSPLSAFT). Gln-23 bears the Pyrrolidone carboxylic acid mark. Cystine bridges form between Cys-31-Cys-59, Cys-38-Cys-52, and Cys-42-Cys-60.

This sequence belongs to the beta-defensin family. In terms of tissue distribution, highly expressed in lung.

Its subcellular location is the secreted. Its function is as follows. Exhibits antimicrobial activity against Gram-negative bacteria and Gram-positive bacteria. May act as a ligand for C-C chemokine receptor CCR6. Binds to CCR6 and induces chemotactic activity of CCR6-expressing cells. This Rattus norvegicus (Rat) protein is Beta-defensin 4 (Defb4).